Here is a 297-residue protein sequence, read N- to C-terminus: Release factor glutamine methyltransferase (297 aa).

Residues 134–138 (GTGSG), Asp-157, and Asn-200 each bind S-adenosyl-L-methionine. A substrate-binding site is contributed by 200–203 (NPPY).

The protein belongs to the protein N5-glutamine methyltransferase family. PrmC subfamily.

It catalyses the reaction L-glutaminyl-[peptide chain release factor] + S-adenosyl-L-methionine = N(5)-methyl-L-glutaminyl-[peptide chain release factor] + S-adenosyl-L-homocysteine + H(+). Methylates the class 1 translation termination release factors RF1/PrfA and RF2/PrfB on the glutamine residue of the universally conserved GGQ motif. This is Release factor glutamine methyltransferase from Bradyrhizobium diazoefficiens (strain JCM 10833 / BCRC 13528 / IAM 13628 / NBRC 14792 / USDA 110).